The following is a 1391-amino-acid chain: DNA-directed RNA polymerase subunit beta' (1391 aa).

The Zn(2+) site is built by C72, C74, C87, and C90. 3 residues coordinate Mg(2+): D462, D464, and D466. The Zn(2+) site is built by C816, C890, C897, and C900.

The protein belongs to the RNA polymerase beta' chain family. In terms of assembly, the RNAP catalytic core consists of 2 alpha, 1 beta, 1 beta' and 1 omega subunit. When a sigma factor is associated with the core the holoenzyme is formed, which can initiate transcription. Mg(2+) serves as cofactor. The cofactor is Zn(2+).

It carries out the reaction RNA(n) + a ribonucleoside 5'-triphosphate = RNA(n+1) + diphosphate. DNA-dependent RNA polymerase catalyzes the transcription of DNA into RNA using the four ribonucleoside triphosphates as substrates. The sequence is that of DNA-directed RNA polymerase subunit beta' from Neisseria meningitidis serogroup C / serotype 2a (strain ATCC 700532 / DSM 15464 / FAM18).